Here is a 253-residue protein sequence, read N- to C-terminus: Succinate dehydrogenase iron-sulfur subunit (253 aa).

Residues Cys64, Cys69, and Cys84 each contribute to the [2Fe-2S] cluster site. Residues 146 to 174 enclose the 4Fe-4S ferredoxin-type domain; sequence RQWAYELSKCMTCGVCLEACPNVNSKSKF. 3 residues coordinate [4Fe-4S] cluster: Cys155, Cys158, and Cys161. [3Fe-4S] cluster contacts are provided by Cys165, Cys212, and Cys218. Residue Cys222 participates in [4Fe-4S] cluster binding.

This sequence belongs to the succinate dehydrogenase/fumarate reductase iron-sulfur protein family. In B.subtilis succinate dehydrogenase forms part of an enzyme complex containing three subunits: a flavoprotein, an iron-sulfur protein and cytochrome b-558. [2Fe-2S] cluster serves as cofactor. It depends on [3Fe-4S] cluster as a cofactor. Requires [4Fe-4S] cluster as cofactor.

It carries out the reaction a quinone + succinate = fumarate + a quinol. The protein operates within carbohydrate metabolism; tricarboxylic acid cycle; fumarate from succinate (bacterial route): step 1/1. The chain is Succinate dehydrogenase iron-sulfur subunit (sdhB) from Bacillus subtilis (strain 168).